The sequence spans 234 residues: Phosphoribosylaminoimidazole-succinocarboxamide synthase (234 aa).

It belongs to the SAICAR synthetase family.

The catalysed reaction is 5-amino-1-(5-phospho-D-ribosyl)imidazole-4-carboxylate + L-aspartate + ATP = (2S)-2-[5-amino-1-(5-phospho-beta-D-ribosyl)imidazole-4-carboxamido]succinate + ADP + phosphate + 2 H(+). Its pathway is purine metabolism; IMP biosynthesis via de novo pathway; 5-amino-1-(5-phospho-D-ribosyl)imidazole-4-carboxamide from 5-amino-1-(5-phospho-D-ribosyl)imidazole-4-carboxylate: step 1/2. In Streptococcus agalactiae serotype V (strain ATCC BAA-611 / 2603 V/R), this protein is Phosphoribosylaminoimidazole-succinocarboxamide synthase.